The primary structure comprises 285 residues: Bis(5'-nucleosyl)-tetraphosphatase, symmetrical (285 aa).

Belongs to the Ap4A hydrolase family.

The enzyme catalyses P(1),P(4)-bis(5'-adenosyl) tetraphosphate + H2O = 2 ADP + 2 H(+). Hydrolyzes diadenosine 5',5'''-P1,P4-tetraphosphate to yield ADP. This Colwellia psychrerythraea (strain 34H / ATCC BAA-681) (Vibrio psychroerythus) protein is Bis(5'-nucleosyl)-tetraphosphatase, symmetrical.